The following is a 94-amino-acid chain: Small ribosomal subunit protein bS18 (94 aa).

The protein belongs to the bacterial ribosomal protein bS18 family. As to quaternary structure, part of the 30S ribosomal subunit. Forms a tight heterodimer with protein bS6.

Its function is as follows. Binds as a heterodimer with protein bS6 to the central domain of the 16S rRNA, where it helps stabilize the platform of the 30S subunit. The chain is Small ribosomal subunit protein bS18 from Rickettsia bellii (strain OSU 85-389).